A 327-amino-acid chain; its full sequence is MKIAIDVMGGDRAPDEILKGALLASKEVEGEIVLIGPEEIVKNKGLPFVSASEIVKMDDPPLEVLRKKNSSMHMGLKLLSEGKVDAFVSAGATGPLFLGATSIVGKLEGIERPALGVAVPSLKGATVLIDAGANAKVRPEHLVDFAFMGIAYSKVLGAENPRVGLLNMGSEENKGPDDIKRAYQLLKEFLGDTFFGNVEGHDINLGTVDVVVADGFSGNVALKTMEGTAKLVTSVLKESIKDGGFLSLLGALLMKRSFDKMKEKLDPRSYGGTFILGVKGIVVKAHGSSDAKAIKHAIKVAEKGIRVNIVQEIERGISHVRNSGDGR.

This sequence belongs to the PlsX family. Homodimer. Probably interacts with PlsY.

It localises to the cytoplasm. The enzyme catalyses a fatty acyl-[ACP] + phosphate = an acyl phosphate + holo-[ACP]. The protein operates within lipid metabolism; phospholipid metabolism. Its function is as follows. Catalyzes the reversible formation of acyl-phosphate (acyl-PO(4)) from acyl-[acyl-carrier-protein] (acyl-ACP). This enzyme utilizes acyl-ACP as fatty acyl donor, but not acyl-CoA. The sequence is that of Phosphate acyltransferase from Thermotoga maritima (strain ATCC 43589 / DSM 3109 / JCM 10099 / NBRC 100826 / MSB8).